A 178-amino-acid chain; its full sequence is Stathmin-2-A (178 aa).

The SLD domain occupies 38 to 178 (DDMEIKQLNK…RNKEQLELSG (141 aa)). Residues 75–178 (KKKDVSLGEI…RNKEQLELSG (104 aa)) adopt a coiled-coil conformation.

Belongs to the stathmin family. In terms of tissue distribution, nervous tissue.

The protein localises to the cytoplasm. It is found in the membrane. Its subcellular location is the cell projection. It localises to the lamellipodium. This is Stathmin-2-A (stmn2-a) from Xenopus laevis (African clawed frog).